A 459-amino-acid chain; its full sequence is Hemopexin (459 aa).

An N-terminal signal peptide occupies residues 1–23 (MARALRVPVALWLLGLCWSLAKA). 3 disulfides stabilise this stretch: Cys52/Cys232, Cys150/Cys155, and Cys189/Cys201. Hemopexin repeat units lie at residues 55–95 (GWGF…WKDA), 96–140 (PSPV…FPGI), 141–185 (PFPL…SWPA), and 186–232 (VGNC…FMSC). His81 contributes to the heme binding site. His151 contacts heme. An N-linked (GlcNAc...) asparagine glycan is attached at Asn188. An N-linked (GlcNAc...) asparagine glycan is attached at Asn218. A heme-binding site is contributed by His237. A glycan (N-linked (GlcNAc...) asparagine) is linked at Asn241. Cystine bridges form between Cys250-Cys453, Cys359-Cys401, and Cys411-Cys428. Hemopexin repeat units lie at residues 252 to 297 (PHLV…WPQG), 298 to 345 (PSTV…FGSP), 350 to 389 (LHSV…WTEL), and 393 to 444 (HTKV…LPQA). A heme-binding site is contributed by His286.

The protein belongs to the hemopexin family.

The protein resides in the secreted. Functionally, binds heme and transports it to the liver for breakdown and iron recovery, after which the free hemopexin returns to the circulation. This chain is Hemopexin (HPX), found in Bos taurus (Bovine).